The following is a 353-amino-acid chain: Suppressor of RNA-mediated gene silencing (353 aa).

It belongs to the phytoreovirus non-structural protein 10 family.

Its function is as follows. Suppressor of RNA-mediated gene silencing, also known as post-transcriptional gene silencing (PTGS), a mechanism of plant viral defense that limits the accumulation of viral RNAs. The polypeptide is Suppressor of RNA-mediated gene silencing (Rice dwarf virus (isolate Fujian) (RDV)).